A 315-amino-acid chain; its full sequence is GTPase Era (315 aa).

The 170-residue stretch at 21 to 190 (RSGFVAIVGR…QSALEARLDP (170 aa)) folds into the Era-type G domain. A G1 region spans residues 29-36 (GRPNVGKS). 29-36 (GRPNVGKS) is a GTP binding site. The tract at residues 55 to 59 (QTTRN) is G2. The interval 76–79 (DTPG) is G3. Residues 76–80 (DTPGI) and 138–141 (NKQD) each bind GTP. A G4 region spans residues 138–141 (NKQD). The segment at 169–171 (FSA) is G5. The KH type-2 domain maps to 221–297 (TRQEVPHSVA…YLKLFVKVEP (77 aa)).

Belongs to the TRAFAC class TrmE-Era-EngA-EngB-Septin-like GTPase superfamily. Era GTPase family. In terms of assembly, monomer.

It localises to the cytoplasm. Its subcellular location is the cell inner membrane. Functionally, an essential GTPase that binds both GDP and GTP, with rapid nucleotide exchange. Plays a role in 16S rRNA processing and 30S ribosomal subunit biogenesis and possibly also in cell cycle regulation and energy metabolism. The polypeptide is GTPase Era (Synechocystis sp. (strain ATCC 27184 / PCC 6803 / Kazusa)).